A 230-amino-acid chain; its full sequence is uncharacterized protein (230 aa).

This sequence belongs to the transferase hexapeptide repeat family.

This is an uncharacterized protein from Escherichia coli (strain K12).